A 373-amino-acid chain; its full sequence is Thyroid hormone receptor beta-A (373 aa).

The interval M1–L18 is modulating. 2 consecutive NR C4-type zinc fingers follow at residues C19–C39 and C57–C81. A DNA-binding region (nuclear receptor) is located at residues C19 to D93. Positions E129 to D373 constitute an NR LBD domain.

This sequence belongs to the nuclear hormone receptor family. NR1 subfamily.

The protein resides in the nucleus. Its function is as follows. High affinity receptor for triiodothyronine (T3). The protein is Thyroid hormone receptor beta-A (thrb-a) of Xenopus laevis (African clawed frog).